We begin with the raw amino-acid sequence, 448 residues long: Glutamyl-tRNA reductase 2 (448 aa).

Substrate-binding positions include 50-53 (TCER), Ser-109, 114-116 (ESD), and Gln-120. Cys-51 acts as the Nucleophile in catalysis. 190-195 (GTGQVA) contributes to the NADP(+) binding site. The disordered stretch occupies residues 423–448 (DQAVPAYSPQPIGNTSNAAASATPRR). Polar residues predominate over residues 433–442 (PIGNTSNAAA).

It belongs to the glutamyl-tRNA reductase family. Homodimer.

The catalysed reaction is (S)-4-amino-5-oxopentanoate + tRNA(Glu) + NADP(+) = L-glutamyl-tRNA(Glu) + NADPH + H(+). The protein operates within porphyrin-containing compound metabolism; protoporphyrin-IX biosynthesis; 5-aminolevulinate from L-glutamyl-tRNA(Glu): step 1/2. In terms of biological role, catalyzes the NADPH-dependent reduction of glutamyl-tRNA(Glu) to glutamate 1-semialdehyde (GSA). The protein is Glutamyl-tRNA reductase 2 of Nocardioides sp. (strain ATCC BAA-499 / JS614).